Consider the following 320-residue polypeptide: MQTRNAFSWIKKEITRSISVLLMIYIITRAPISNAYPIFAQQGYENPREATGRIVCANCHLANKPVDIEVPQAILPDTVFEAVVRIPYDMQVKQVLANGKKGALNVGAVLILPEGFELAPPDRLSPEIKEKIGNLSFQSYRPTKKNIIVIGPVPGKKYSEITFPILSPDPATKRDVYFLKYPIYVGGTRGRGQIYPDGSKSNNNVYNATATGVVNKKIRKEKGGYEITIVDGSDGREVIDIIPPGPELLVSEGESIKLDQPLTSNPNVGGFGQGDAEIVLQDPLRVQGLLLFLASIILAQIFLVLKKKQFEKVQLSEMNF.

Positions 1 to 35 are cleaved as a signal peptide; the sequence is MQTRNAFSWIKKEITRSISVLLMIYIITRAPISNA. Tyr-36, Cys-56, Cys-59, and His-60 together coordinate heme. A helical membrane pass occupies residues 286 to 305; that stretch reads VQGLLLFLASIILAQIFLVL.

Belongs to the cytochrome f family. As to quaternary structure, the 4 large subunits of the cytochrome b6-f complex are cytochrome b6, subunit IV (17 kDa polypeptide, petD), cytochrome f and the Rieske protein, while the 4 small subunits are PetG, PetL, PetM and PetN. The complex functions as a dimer. Requires heme as cofactor.

Its subcellular location is the plastid. It localises to the chloroplast thylakoid membrane. Its function is as follows. Component of the cytochrome b6-f complex, which mediates electron transfer between photosystem II (PSII) and photosystem I (PSI), cyclic electron flow around PSI, and state transitions. This chain is Cytochrome f (petA), found in Vicia faba (Broad bean).